Reading from the N-terminus, the 208-residue chain is MARYRGPVEKLERRLGVSLALKGERRLAGKSALDKRPYAPGQHGQRKTKISEYGLQLREKQKAKFMYGVSEKQFRRLFSEAARREGNTGALLIGLLEQRLDNVVYRMGFATTRRFARQLVTHGHILVNGKKVDIPSYRVTAGEKIEVAEKSKTNPQIVRAIELTNQTGIVAWVDVEKDKKYGIFTRIPEREEVVIPVEERYIVELYSK.

Residues 98-161 (QRLDNVVYRM…KTNPQIVRAI (64 aa)) form the S4 RNA-binding domain.

Belongs to the universal ribosomal protein uS4 family. Part of the 30S ribosomal subunit. Contacts protein S5. The interaction surface between S4 and S5 is involved in control of translational fidelity.

Its function is as follows. One of the primary rRNA binding proteins, it binds directly to 16S rRNA where it nucleates assembly of the body of the 30S subunit. Functionally, with S5 and S12 plays an important role in translational accuracy. The chain is Small ribosomal subunit protein uS4 from Campylobacter fetus subsp. fetus (strain 82-40).